The chain runs to 406 residues: RILP-like protein 1 (406 aa).

Residues 5–99 (QLGAALDKSA…LEKEKKHKKE (95 aa)) enclose the RH1 domain. Residues 105–319 (DVWRGEAQDL…KVFMLQEEIA (215 aa)) adopt a coiled-coil conformation. 2 disordered regions span residues 234–272 (EVSS…PAQE) and 323–351 (SEEQ…NFQP). Residues 241–257 (EVSRLKEKLKEQSRSNE) show a composition bias toward basic and acidic residues. The 70-residue stretch at 289 to 358 (RPRFTLQELR…FQPESGIKRL (70 aa)) folds into the RH2 domain. The span at 340–351 (TLRTNPRSNFQP) shows a compositional bias: polar residues.

The protein belongs to the RILPL family.

Its subcellular location is the cytoplasm. It is found in the cytosol. The protein resides in the cytoskeleton. It localises to the microtubule organizing center. The protein localises to the centrosome. Its subcellular location is the cell projection. It is found in the cilium. In terms of biological role, plays a role in the regulation of cell shape and polarity. Plays a role in cellular protein transport, including protein transport away from primary cilia. Neuroprotective protein. In Danio rerio (Zebrafish), this protein is RILP-like protein 1 (rilpl1).